Reading from the N-terminus, the 357-residue chain is UPF0283 membrane protein BOV_0999 (357 aa).

The interval 1 to 36 (MSDKTPRKPTAFRLEQPARVSAASEQEEPRRPRAVK) is disordered. The span at 27 to 36 (EEPRRPRAVK) shows a compositional bias: basic and acidic residues. 2 consecutive transmembrane segments (helical) span residues 78 to 98 (ILFG…TEDL) and 109 to 129 (LGWT…AIIL).

Belongs to the UPF0283 family.

Its subcellular location is the cell inner membrane. This chain is UPF0283 membrane protein BOV_0999, found in Brucella ovis (strain ATCC 25840 / 63/290 / NCTC 10512).